A 230-amino-acid polypeptide reads, in one-letter code: Demethylmenaquinone methyltransferase (230 aa).

Residues Thr-57, Asp-77, and 101-102 (DI) contribute to the S-adenosyl-L-methionine site.

This sequence belongs to the class I-like SAM-binding methyltransferase superfamily. MenG/UbiE family.

The catalysed reaction is a 2-demethylmenaquinol + S-adenosyl-L-methionine = a menaquinol + S-adenosyl-L-homocysteine + H(+). It functions in the pathway quinol/quinone metabolism; menaquinone biosynthesis; menaquinol from 1,4-dihydroxy-2-naphthoate: step 2/2. Functionally, methyltransferase required for the conversion of demethylmenaquinol (DMKH2) to menaquinol (MKH2). This is Demethylmenaquinone methyltransferase from Chlamydia pneumoniae (Chlamydophila pneumoniae).